The primary structure comprises 331 residues: Glycerol-3-phosphate dehydrogenase [NAD(P)+] (331 aa).

Residues Ser-11, Phe-12, Arg-32, and Lys-106 each coordinate NADPH. The sn-glycerol 3-phosphate site is built by Lys-106, Gly-134, and Ser-136. Position 138 (Ala-138) interacts with NADPH. The sn-glycerol 3-phosphate site is built by Lys-189, Asp-242, Ser-252, Arg-253, and Asn-254. The active-site Proton acceptor is Lys-189. Arg-253 provides a ligand contact to NADPH. NADPH contacts are provided by Val-277 and Glu-279.

The protein belongs to the NAD-dependent glycerol-3-phosphate dehydrogenase family.

The protein localises to the cytoplasm. It catalyses the reaction sn-glycerol 3-phosphate + NAD(+) = dihydroxyacetone phosphate + NADH + H(+). It carries out the reaction sn-glycerol 3-phosphate + NADP(+) = dihydroxyacetone phosphate + NADPH + H(+). It participates in membrane lipid metabolism; glycerophospholipid metabolism. Functionally, catalyzes the reduction of the glycolytic intermediate dihydroxyacetone phosphate (DHAP) to sn-glycerol 3-phosphate (G3P), the key precursor for phospholipid synthesis. In Clostridium perfringens (strain SM101 / Type A), this protein is Glycerol-3-phosphate dehydrogenase [NAD(P)+].